Consider the following 162-residue polypeptide: Shikimate kinase (162 aa).

10–15 contacts ATP; sequence GAGKST. S14 lines the Mg(2+) pocket. Positions 28, 52, and 73 each coordinate substrate. R113 lines the ATP pocket. Substrate is bound at residue R129.

It belongs to the shikimate kinase family. As to quaternary structure, monomer. It depends on Mg(2+) as a cofactor.

The protein resides in the cytoplasm. The enzyme catalyses shikimate + ATP = 3-phosphoshikimate + ADP + H(+). The protein operates within metabolic intermediate biosynthesis; chorismate biosynthesis; chorismate from D-erythrose 4-phosphate and phosphoenolpyruvate: step 5/7. Functionally, catalyzes the specific phosphorylation of the 3-hydroxyl group of shikimic acid using ATP as a cosubstrate. In Lactococcus lactis subsp. lactis (strain IL1403) (Streptococcus lactis), this protein is Shikimate kinase.